Here is a 732-residue protein sequence, read N- to C-terminus: B-cadherin (732 aa).

Positions 1-6 (LRRQKR) are excised as a propeptide. Cadherin domains follow at residues 6–114 (RDWV…KPQF), 115–227 (TQEV…APEF), 228–339 (DPKT…APVF), 340–443 (DPPL…VNDH), and 444–554 (GPEP…RVDT). The Extracellular segment spans residues 6–554 (RDWVIPPIKV…SCAQKPRVDT (549 aa)). A glycan (N-linked (GlcNAc...) asparagine) is linked at Asn-137. Asn-410 carries an N-linked (GlcNAc...) asparagine glycan. A helical membrane pass occupies residues 555-580 (GVPIVLAVLGAVLALLLVLLLLLLLV). The Cytoplasmic segment spans residues 581–732 (RRRKVVKEPL…ELYGGGEDEE (152 aa)).

In terms of tissue distribution, expressed in a wide variety of tissues.

The protein localises to the cell membrane. Functionally, cadherins are calcium-dependent cell adhesion proteins. They preferentially interact with themselves in a homophilic manner in connecting cells; cadherins may thus contribute to the sorting of heterogeneous cell types. B-cadherin may have important functions in neurogenesis, in at least some epithelia, and in embryogenesis. This chain is B-cadherin (K-CAM), found in Gallus gallus (Chicken).